Reading from the N-terminus, the 372-residue chain is Putative 26S proteasome regulatory subunit homolog MTH_1011 (372 aa).

Residue 164–171 participates in ATP binding; the sequence is GSPGTGKT.

It belongs to the AAA ATPase family.

Its function is as follows. The 26S proteasome is involved in the ATP-dependent degradation of ubiquitinated proteins. The regulatory (or ATPase) complex confers ATP dependency and substrate specificity to the 26S complex. The sequence is that of Putative 26S proteasome regulatory subunit homolog MTH_1011 from Methanothermobacter thermautotrophicus (strain ATCC 29096 / DSM 1053 / JCM 10044 / NBRC 100330 / Delta H) (Methanobacterium thermoautotrophicum).